A 518-amino-acid polypeptide reads, in one-letter code: Nif-specific regulatory protein (518 aa).

The 142-residue stretch at 35–176 (NTARALAAIL…MVANLISQPL (142 aa)) folds into the GAF domain. Residues 205–432 (VGKSQAMRQT…LENCLERASV (228 aa)) form the Sigma-54 factor interaction domain. ATP-binding positions include 232–239 (GESGTGKE) and 295–304 (ADGGTLFLDE). The inter-domain linker stretch occupies residues 433 to 475 (MTDEGLIDRDVILFNHHESPALSVKPGLPLATDESWLDQELDE). Residues 476-518 (RQRVIAALEKTGWVQAKAARLLGMTPRQIAYRIQIMDINMHRI) are C-terminal DNA-binding domain. Positions 490 to 509 (QAKAARLLGMTPRQIAYRIQ) form a DNA-binding region, H-T-H motif.

As to quaternary structure, interacts with sigma-54.

Required for activation of most nif operons, which are directly involved in nitrogen fixation. In Enterobacter agglomerans (Erwinia herbicola), this protein is Nif-specific regulatory protein (nifA).